A 452-amino-acid polypeptide reads, in one-letter code: Bifunctional protein GlmU (452 aa).

The segment at 1 to 224 (MNIVILAAGQ…EWEVLGVNSK (224 aa)) is pyrophosphorylase. Residues 6–9 (LAAG), Lys-20, Gln-71, 76–77 (GT), 98–100 (YGD), Gly-134, Glu-149, Asn-164, and Asn-222 contribute to the UDP-N-acetyl-alpha-D-glucosamine site. Asp-100 provides a ligand contact to Mg(2+). Mg(2+) is bound at residue Asn-222. Positions 225–245 (VQLAELERQHQLNLAGELLVA) are linker. An N-acetyltransferase region spans residues 246-452 (GVRLADPARI…GWERPKKVKK (207 aa)). 2 residues coordinate UDP-N-acetyl-alpha-D-glucosamine: Arg-328 and Lys-346. His-358 acts as the Proton acceptor in catalysis. UDP-N-acetyl-alpha-D-glucosamine-binding residues include Tyr-361 and Asn-372. Acetyl-CoA-binding positions include Ala-375, 381 to 382 (NY), Ser-400, Ala-418, and Arg-435.

The protein in the N-terminal section; belongs to the N-acetylglucosamine-1-phosphate uridyltransferase family. In the C-terminal section; belongs to the transferase hexapeptide repeat family. In terms of assembly, homotrimer. Mg(2+) is required as a cofactor.

The protein localises to the cytoplasm. The enzyme catalyses alpha-D-glucosamine 1-phosphate + acetyl-CoA = N-acetyl-alpha-D-glucosamine 1-phosphate + CoA + H(+). The catalysed reaction is N-acetyl-alpha-D-glucosamine 1-phosphate + UTP + H(+) = UDP-N-acetyl-alpha-D-glucosamine + diphosphate. Its pathway is nucleotide-sugar biosynthesis; UDP-N-acetyl-alpha-D-glucosamine biosynthesis; N-acetyl-alpha-D-glucosamine 1-phosphate from alpha-D-glucosamine 6-phosphate (route II): step 2/2. It functions in the pathway nucleotide-sugar biosynthesis; UDP-N-acetyl-alpha-D-glucosamine biosynthesis; UDP-N-acetyl-alpha-D-glucosamine from N-acetyl-alpha-D-glucosamine 1-phosphate: step 1/1. It participates in bacterial outer membrane biogenesis; LPS lipid A biosynthesis. Its function is as follows. Catalyzes the last two sequential reactions in the de novo biosynthetic pathway for UDP-N-acetylglucosamine (UDP-GlcNAc). The C-terminal domain catalyzes the transfer of acetyl group from acetyl coenzyme A to glucosamine-1-phosphate (GlcN-1-P) to produce N-acetylglucosamine-1-phosphate (GlcNAc-1-P), which is converted into UDP-GlcNAc by the transfer of uridine 5-monophosphate (from uridine 5-triphosphate), a reaction catalyzed by the N-terminal domain. The sequence is that of Bifunctional protein GlmU from Dechloromonas aromatica (strain RCB).